Reading from the N-terminus, the 409-residue chain is Pyruvate dehydrogenase E1 component subunit alpha, mitochondrial (409 aa).

The residue at position 6 (T6) is a Phosphothreonine. The pyruvate site is built by H109, Y135, R136, A174, G182, V184, D213, G214, A215, N242, and Y244. Positions 135 and 136 each coordinate thiamine diphosphate. Residues G182, V184, D213, G214, A215, and N242 each contribute to the thiamine diphosphate site. D213 is a binding site for Mg(2+). Mg(2+) contacts are provided by N242 and Y244. Y306 bears the Phosphotyrosine mark. A thiamine diphosphate-binding site is contributed by H309. Residues S310 and S312 each carry the phosphoserine modification.

In terms of assembly, tetramer of 2 alpha and 2 beta subunits. It depends on thiamine diphosphate as a cofactor. Requires Mg(2+) as cofactor.

It localises to the mitochondrion matrix. The enzyme catalyses N(6)-[(R)-lipoyl]-L-lysyl-[protein] + pyruvate + H(+) = N(6)-[(R)-S(8)-acetyldihydrolipoyl]-L-lysyl-[protein] + CO2. With respect to regulation, E1 activity is regulated by phosphorylation (inactivation) and dephosphorylation (activation) of the alpha subunit. In terms of biological role, the pyruvate dehydrogenase complex catalyzes the overall conversion of pyruvate to acetyl-CoA and CO(2). It contains multiple copies of three enzymatic components: pyruvate dehydrogenase (E1), dihydrolipoamide acetyltransferase (E2) and lipoamide dehydrogenase (E3). The sequence is that of Pyruvate dehydrogenase E1 component subunit alpha, mitochondrial (pda1) from Schizosaccharomyces pombe (strain 972 / ATCC 24843) (Fission yeast).